We begin with the raw amino-acid sequence, 165 residues long: Putative TRAP transporter small permease protein HI_0051 (165 aa).

4 helical membrane passes run 20 to 40, 51 to 71, 94 to 114, and 136 to 156; these read LEYL…FNSV, FSEE…IILV, IVLI…AYGA, and LYLA…FSMI.

It belongs to the TRAP transporter small permease family.

It is found in the cell inner membrane. In Haemophilus influenzae (strain ATCC 51907 / DSM 11121 / KW20 / Rd), this protein is Putative TRAP transporter small permease protein HI_0051.